The sequence spans 296 residues: Transcription factor bHLH99 (296 aa).

The 52-residue stretch at 99–150 (NQRMNHIAVERNRRKQMNHFLSILKSMMPLSYSQPNDQASIIEGTISYLKKL) folds into the bHLH domain.

In terms of assembly, homodimer. In terms of tissue distribution, expressed constitutively in roots, stems, and flowers.

The protein localises to the nucleus. The chain is Transcription factor bHLH99 (BHLH99) from Arabidopsis thaliana (Mouse-ear cress).